The chain runs to 91 residues: Small ribosomal subunit protein bS20 (91 aa).

This sequence belongs to the bacterial ribosomal protein bS20 family.

In terms of biological role, binds directly to 16S ribosomal RNA. In Mycoplasma mobile (strain ATCC 43663 / 163K / NCTC 11711) (Mesomycoplasma mobile), this protein is Small ribosomal subunit protein bS20.